Reading from the N-terminus, the 315-residue chain is MQIKLANPRGFCAGVDRAIEIVNRALEVFGPPIYVRHEVVHNKFVVEDLRSRGAIFVEELDQVPDDVIVIFSAHGVSQAVRTEAAGRGLKVFDATCPLVTKVHIEVARYSRDGRECILIGHAGHPEVEGTMGQYDASNGGAIYLVEDEEDVASLQVRNPDSLAFVTQTTLSMDDTSRVIDALRKRFPAIGGPRKDDICYATQNRQDAVKQLADECDVVLVVGSPNSSNSNRLRELAERMATPAYLIDGAEDMQQGWFEGVERIGITAGASAPEVLVRGVIQQLQAWGATGADELAGREENITFSMPKELRVKSLL.

Position 12 (C12) interacts with [4Fe-4S] cluster. 2 residues coordinate (2E)-4-hydroxy-3-methylbut-2-enyl diphosphate: H41 and H74. Dimethylallyl diphosphate is bound by residues H41 and H74. Isopentenyl diphosphate-binding residues include H41 and H74. Residue C96 participates in [4Fe-4S] cluster binding. H124 is a (2E)-4-hydroxy-3-methylbut-2-enyl diphosphate binding site. A dimethylallyl diphosphate-binding site is contributed by H124. H124 contacts isopentenyl diphosphate. The active-site Proton donor is the E126. (2E)-4-hydroxy-3-methylbut-2-enyl diphosphate is bound at residue T168. C198 contributes to the [4Fe-4S] cluster binding site. (2E)-4-hydroxy-3-methylbut-2-enyl diphosphate is bound by residues S226, S227, N228, and S270. The dimethylallyl diphosphate site is built by S226, S227, N228, and S270. Isopentenyl diphosphate is bound by residues S226, S227, N228, and S270.

Belongs to the IspH family. Requires [4Fe-4S] cluster as cofactor.

It carries out the reaction isopentenyl diphosphate + 2 oxidized [2Fe-2S]-[ferredoxin] + H2O = (2E)-4-hydroxy-3-methylbut-2-enyl diphosphate + 2 reduced [2Fe-2S]-[ferredoxin] + 2 H(+). The catalysed reaction is dimethylallyl diphosphate + 2 oxidized [2Fe-2S]-[ferredoxin] + H2O = (2E)-4-hydroxy-3-methylbut-2-enyl diphosphate + 2 reduced [2Fe-2S]-[ferredoxin] + 2 H(+). The protein operates within isoprenoid biosynthesis; dimethylallyl diphosphate biosynthesis; dimethylallyl diphosphate from (2E)-4-hydroxy-3-methylbutenyl diphosphate: step 1/1. It functions in the pathway isoprenoid biosynthesis; isopentenyl diphosphate biosynthesis via DXP pathway; isopentenyl diphosphate from 1-deoxy-D-xylulose 5-phosphate: step 6/6. Functionally, catalyzes the conversion of 1-hydroxy-2-methyl-2-(E)-butenyl 4-diphosphate (HMBPP) into a mixture of isopentenyl diphosphate (IPP) and dimethylallyl diphosphate (DMAPP). Acts in the terminal step of the DOXP/MEP pathway for isoprenoid precursor biosynthesis. This Pseudomonas savastanoi pv. phaseolicola (strain 1448A / Race 6) (Pseudomonas syringae pv. phaseolicola (strain 1448A / Race 6)) protein is 4-hydroxy-3-methylbut-2-enyl diphosphate reductase.